Reading from the N-terminus, the 274-residue chain is MRFTKMHGLGNDFIVIEAVEGVDYSELAVKLCDRHFGIGADGLLVVEPSHIADIKMRIFNADGSEAEMCGNGSRCFAKYVYEKGIVSKQKMTVETLAGVIMPELFVENGKIKSVKVYMGSPIFESSKIPVKSEKQKFIDEPVKIDGKTYRLSSVRVGVPHTILFVSSFEESFMKELGPKIEKSSLFPEGTNVDFVKVEDEENISVRTWERGVGLTLACGSGASASAVVSSLLGRTRRSVNVHFKAGVLLVEWKEDNSIYLSGEVEEVFRGEIEI.

Substrate contacts are provided by asparagine 11 and asparagine 60. The active-site Proton donor is the cysteine 69. Substrate is bound by residues 70 to 71, asparagine 191, and 209 to 210; these read GN and ER. Catalysis depends on cysteine 218, which acts as the Proton acceptor. Substrate is bound at residue 219-220; it reads GS.

The protein belongs to the diaminopimelate epimerase family. Homodimer.

The protein localises to the cytoplasm. The catalysed reaction is (2S,6S)-2,6-diaminopimelate = meso-2,6-diaminopimelate. Its pathway is amino-acid biosynthesis; L-lysine biosynthesis via DAP pathway; DL-2,6-diaminopimelate from LL-2,6-diaminopimelate: step 1/1. Its function is as follows. Catalyzes the stereoinversion of LL-2,6-diaminopimelate (L,L-DAP) to meso-diaminopimelate (meso-DAP), a precursor of L-lysine and an essential component of the bacterial peptidoglycan. The protein is Diaminopimelate epimerase of Caldanaerobacter subterraneus subsp. tengcongensis (strain DSM 15242 / JCM 11007 / NBRC 100824 / MB4) (Thermoanaerobacter tengcongensis).